Reading from the N-terminus, the 265-residue chain is 4-hydroxy-tetrahydrodipicolinate reductase (265 aa).

9–14 (GPRGRM) provides a ligand contact to NAD(+). Lysine 37 provides a ligand contact to NADP(+). NAD(+) contacts are provided by residues 99 to 101 (GTT) and 125 to 128 (APNF). The active-site Proton donor/acceptor is histidine 155. Histidine 156 contributes to the (S)-2,3,4,5-tetrahydrodipicolinate binding site. Lysine 159 functions as the Proton donor in the catalytic mechanism. 165–166 (GT) serves as a coordination point for (S)-2,3,4,5-tetrahydrodipicolinate. Residues 178-190 (RESQKQGHPKEEE) show a composition bias toward basic and acidic residues. The tract at residues 178–200 (RESQKQGHPKEEETLPGARGADM) is disordered.

It belongs to the DapB family.

The protein localises to the cytoplasm. The catalysed reaction is (S)-2,3,4,5-tetrahydrodipicolinate + NAD(+) + H2O = (2S,4S)-4-hydroxy-2,3,4,5-tetrahydrodipicolinate + NADH + H(+). It carries out the reaction (S)-2,3,4,5-tetrahydrodipicolinate + NADP(+) + H2O = (2S,4S)-4-hydroxy-2,3,4,5-tetrahydrodipicolinate + NADPH + H(+). The protein operates within amino-acid biosynthesis; L-lysine biosynthesis via DAP pathway; (S)-tetrahydrodipicolinate from L-aspartate: step 4/4. Its function is as follows. Catalyzes the conversion of 4-hydroxy-tetrahydrodipicolinate (HTPA) to tetrahydrodipicolinate. This Oceanobacillus iheyensis (strain DSM 14371 / CIP 107618 / JCM 11309 / KCTC 3954 / HTE831) protein is 4-hydroxy-tetrahydrodipicolinate reductase.